The sequence spans 543 residues: MSSVLPTPVLPTPGRNINRGHFPDDFIFGAGTSSYQIEGAAREGGRGPSIWDTFTHTHPELIQDGSNGDTAINSYNLYKEDIKIVKLMGLDAYRFSISWPRILPGGSINAGINQEGIKYYNNLIDELLANDIVPYVTLFHWDVPQALQDQYDGFLSDKIVDDFRDFAELCFWEFGDRVKNWITINEPESYSNFFGVAYDTPPKAHALKASRLLVPTTVARPSKPVRVFASTADPGTTTADQVYKVGHNLLLAHAAAIQVYRDKFQNTQEGTFGMALVTQWMKPLNENNPADVEAASRAFDFKFGWFMQPLITGEYPKSMRQLLGPRLREFTPDQKKLLIGSYDYVGVNYYTATYVSSAQPPHDKKKAVFHTDGNFYTTDSKDGVLIGPLAGPAWLNIVPEGIYHVLHDIKENYEDPVIYITENGVYEVNDTAKTLSEARVDTTRLHYLQDHLSKVLEARHQGVRVQGYLVWSLMDNWELRAGYTSRFGLIHVDYYNNFARYPKDSAIWFRNAFHKRLRIHVNKARPQEDDGAFDTPRKRLRKY.

Residues Gln-36, His-140, 185–186 (NE), Tyr-350, Glu-422, Trp-471, and Phe-487 each bind a beta-D-glucoside. The active-site Proton donor is the Glu-186. Residue Glu-422 is the Nucleophile of the active site.

This sequence belongs to the glycosyl hydrolase 1 family.

The protein localises to the cytoplasm. The protein resides in the cytosol. It catalyses the reaction deacetylipecoside + H2O = deacetylipecoside aglycone + D-glucose. The catalysed reaction is deacetylisoipecoside + H2O = deacetylisoipecoside aglycone + D-glucose. It functions in the pathway alkaloid biosynthesis. Beta-glucosidase catalyzing deglucosylation on N-deacetylisoipecoside and N-deacetylipecoside. This is Ipecac alkaloid beta-glucosidase 2 from Carapichea ipecacuanha (Ipecac).